The primary structure comprises 69 residues: MKEGIHPKYEEATFTCASCSNEIKTRSTAGDLTLGICSECHPFYTGKHKLVDTAGRVERFRRKYGMQDQ.

The protein belongs to the bacterial ribosomal protein bL31 family. Type A subfamily. In terms of assembly, part of the 50S ribosomal subunit.

Its function is as follows. Binds the 23S rRNA. This is Large ribosomal subunit protein bL31 from Magnetococcus marinus (strain ATCC BAA-1437 / JCM 17883 / MC-1).